A 109-amino-acid polypeptide reads, in one-letter code: Protein phosphatase 1 regulatory subunit 1C (109 aa).

The disordered stretch occupies residues 25-109; it reads AEQIRKRRPT…TNEREEQRDH (85 aa). Over residues 45-54 the composition is skewed to basic and acidic residues; the sequence is NPPEIDDKRV. A compositionally biased stretch (polar residues) spans 55–75; it reads PNTQGELQNASPKQRKQSVYT. Basic and acidic residues predominate over residues 100–109; that stretch reads TNEREEQRDH.

Belongs to the protein phosphatase inhibitor 1 family.

Its subcellular location is the cytoplasm. Functionally, may increase cell susceptibility to TNF-induced apoptosis. The protein is Protein phosphatase 1 regulatory subunit 1C (PPP1R1C) of Pongo abelii (Sumatran orangutan).